We begin with the raw amino-acid sequence, 81 residues long: Small ribosomal subunit protein bS16 (81 aa).

Belongs to the bacterial ribosomal protein bS16 family.

The chain is Small ribosomal subunit protein bS16 from Clostridium perfringens (strain ATCC 13124 / DSM 756 / JCM 1290 / NCIMB 6125 / NCTC 8237 / Type A).